The chain runs to 354 residues: Uroporphyrinogen decarboxylase (354 aa).

Residues 27–31, Asp-77, Tyr-154, Ser-209, and His-327 each bind substrate; that span reads RQAGR.

Belongs to the uroporphyrinogen decarboxylase family. In terms of assembly, homodimer.

The protein resides in the cytoplasm. It carries out the reaction uroporphyrinogen III + 4 H(+) = coproporphyrinogen III + 4 CO2. It participates in porphyrin-containing compound metabolism; protoporphyrin-IX biosynthesis; coproporphyrinogen-III from 5-aminolevulinate: step 4/4. Its function is as follows. Catalyzes the decarboxylation of four acetate groups of uroporphyrinogen-III to yield coproporphyrinogen-III. This Shewanella pealeana (strain ATCC 700345 / ANG-SQ1) protein is Uroporphyrinogen decarboxylase.